Reading from the N-terminus, the 501-residue chain is MRQADSQTQPSPAEQETPQPAGPSNRSPPTMGPQQTGSRKRKAAEVDQGAGTSSSPGPAAPMATAGEGNAEGSMLLTKRPRRPVAHLSMVNYLKGRALGADGHPGLAGFEGDLRSYGVLRLPELLRERQLTLGPLNKVFASQWLNARQVVCGTKCNTLFVVDVKTDHIMRIPLMRDRVPDLSRGPPSCGIHAVELNPSKTLLATGGENPNSLAVYQLPTLDPVCLGDCQGHRDWIFAIAWMSDTVAVSGSRDGTVALWKVDPDMFNGSIAWHKDAGLPVYAHISPTDMEAIPKATTNPGNRKVRALAFSNKNQELGAVSLDGYFHLWKARSSLSRLLSLRLPYCRENVCLTYCDEFSLYAVGSQSHVSFLDLRQGQQNIPPLCSREGGTGVRSLSVHQHIVTVGTGHGSLLFYDIRAQKFLEERSAANPDMFPVPSGRKLKLTCGSGWINQDDLLENYVAGVEDFPNALYTHCYNWPEMKLFVGGGPLASGLHGNYAGLWS.

Residues 1-37 (MRQADSQTQPSPAEQETPQPAGPSNRSPPTMGPQQTG) show a composition bias toward polar residues. Residues 1 to 67 (MRQADSQTQP…PAAPMATAGE (67 aa)) form a disordered region. WD repeat units lie at residues 185 to 225 (PPSC…PVCL), 230 to 268 (GHRD…FNGS), 298 to 337 (PGNR…SRLL), and 384 to 423 (SREG…FLEE).

It belongs to the WD repeat DCAF12 family.

The protein is DDB1- and CUL4-associated factor 12-like protein 1 (Dcaf12l1) of Mus musculus (Mouse).